The sequence spans 188 residues: Elongation factor P (188 aa).

Belongs to the elongation factor P family.

Its subcellular location is the cytoplasm. Its pathway is protein biosynthesis; polypeptide chain elongation. In terms of biological role, involved in peptide bond synthesis. Stimulates efficient translation and peptide-bond synthesis on native or reconstituted 70S ribosomes in vitro. Probably functions indirectly by altering the affinity of the ribosome for aminoacyl-tRNA, thus increasing their reactivity as acceptors for peptidyl transferase. In Leptospira borgpetersenii serovar Hardjo-bovis (strain JB197), this protein is Elongation factor P.